The following is a 249-amino-acid chain: MWVGVISLFPEMFRSVTDFGVTSQAIKKGLLSIETWNPRDFTQDKHRTVDDRPYGGGPGMLMMVQPLRDAITAAREAAPGKTKVIYLSPQGRTLNQAGVEELATNENLVLICGRYEGVDERIIQSEVDEEWSIGDFVLTGGELPAMTLIDSVSRFVPGVLGDFASAEEDSFADGLLDCPHYTRPEVLDGKEVPSVLKSGNHKDIARWRMKQSLGRTWLRRPELLGNLALTDEQELLLAEFVREEHQQSK.

S-adenosyl-L-methionine-binding positions include Gly113 and 133 to 138 (IGDFVL).

This sequence belongs to the RNA methyltransferase TrmD family. Homodimer.

Its subcellular location is the cytoplasm. The catalysed reaction is guanosine(37) in tRNA + S-adenosyl-L-methionine = N(1)-methylguanosine(37) in tRNA + S-adenosyl-L-homocysteine + H(+). Functionally, specifically methylates guanosine-37 in various tRNAs. The polypeptide is tRNA (guanine-N(1)-)-methyltransferase (Aliivibrio salmonicida (strain LFI1238) (Vibrio salmonicida (strain LFI1238))).